Here is a 178-residue protein sequence, read N- to C-terminus: Large ribosomal subunit protein uL10 (178 aa).

It belongs to the universal ribosomal protein uL10 family. In terms of assembly, part of the ribosomal stalk of the 50S ribosomal subunit. The N-terminus interacts with L11 and the large rRNA to form the base of the stalk. The C-terminus forms an elongated spine to which L12 dimers bind in a sequential fashion forming a multimeric L10(L12)X complex.

Its function is as follows. Forms part of the ribosomal stalk, playing a central role in the interaction of the ribosome with GTP-bound translation factors. The chain is Large ribosomal subunit protein uL10 from Stenotrophomonas maltophilia (strain R551-3).